The chain runs to 379 residues: Alanine racemase (379 aa).

Catalysis depends on Lys-37, which acts as the Proton acceptor; specific for D-alanine. Lys-37 carries the N6-(pyridoxal phosphate)lysine modification. Arg-137 provides a ligand contact to substrate. Tyr-269 (proton acceptor; specific for L-alanine) is an active-site residue. Met-317 contacts substrate.

Belongs to the alanine racemase family. Pyridoxal 5'-phosphate serves as cofactor.

The enzyme catalyses L-alanine = D-alanine. The protein operates within amino-acid biosynthesis; D-alanine biosynthesis; D-alanine from L-alanine: step 1/1. Functionally, catalyzes the interconversion of L-alanine and D-alanine. May also act on other amino acids. The sequence is that of Alanine racemase (alr) from Geobacter sp. (strain M21).